Reading from the N-terminus, the 299-residue chain is HTH-type transcriptional regulator CynR (299 aa).

Residues 1–58 (MLSRHINYFLAVAEHGSFTRAASALHVSQPALSQQIRQLEESLGVPLFDRSGRTIRLT) form the HTH lysR-type domain. Positions 18 to 37 (FTRAASALHVSQPALSQQIR) form a DNA-binding region, H-T-H motif.

This sequence belongs to the LysR transcriptional regulatory family.

It is found in the cytoplasm. Positively regulates the cynTSX operon, and negatively regulates its own transcription. Binds specifically to the cynR-cynTSX intergenic region. In Escherichia coli (strain K12), this protein is HTH-type transcriptional regulator CynR (cynR).